The following is a 434-amino-acid chain: Glutamyl-tRNA reductase (434 aa).

Substrate contacts are provided by residues Thr49–Arg52, Ser107, Glu112–Gln114, and Gln118. Cys50 serves as the catalytic Nucleophile. Gly187–Val192 lines the NADP(+) pocket.

The protein belongs to the glutamyl-tRNA reductase family. Homodimer.

The catalysed reaction is (S)-4-amino-5-oxopentanoate + tRNA(Glu) + NADP(+) = L-glutamyl-tRNA(Glu) + NADPH + H(+). It participates in porphyrin-containing compound metabolism; protoporphyrin-IX biosynthesis; 5-aminolevulinate from L-glutamyl-tRNA(Glu): step 1/2. In terms of biological role, catalyzes the NADPH-dependent reduction of glutamyl-tRNA(Glu) to glutamate 1-semialdehyde (GSA). The protein is Glutamyl-tRNA reductase of Hydrogenovibrio crunogenus (strain DSM 25203 / XCL-2) (Thiomicrospira crunogena).